The primary structure comprises 390 residues: Succinate--CoA ligase [ADP-forming] subunit beta (390 aa).

The ATP-grasp domain maps to 9–244 (KSLFQQYGIP…ISQEDVREAK (236 aa)). Residues K46, E99, L102, and E107 each contribute to the ATP site. 2 residues coordinate Mg(2+): N199 and D213. Substrate is bound by residues N264 and 321-323 (GIV).

This sequence belongs to the succinate/malate CoA ligase beta subunit family. Heterotetramer of two alpha and two beta subunits. Requires Mg(2+) as cofactor.

It catalyses the reaction succinate + ATP + CoA = succinyl-CoA + ADP + phosphate. The enzyme catalyses GTP + succinate + CoA = succinyl-CoA + GDP + phosphate. It functions in the pathway carbohydrate metabolism; tricarboxylic acid cycle; succinate from succinyl-CoA (ligase route): step 1/1. Succinyl-CoA synthetase functions in the citric acid cycle (TCA), coupling the hydrolysis of succinyl-CoA to the synthesis of either ATP or GTP and thus represents the only step of substrate-level phosphorylation in the TCA. The beta subunit provides nucleotide specificity of the enzyme and binds the substrate succinate, while the binding sites for coenzyme A and phosphate are found in the alpha subunit. The protein is Succinate--CoA ligase [ADP-forming] subunit beta of Hydrogenovibrio crunogenus (strain DSM 25203 / XCL-2) (Thiomicrospira crunogena).